A 140-amino-acid polypeptide reads, in one-letter code: Large ribosomal subunit protein uL24 (140 aa).

It belongs to the universal ribosomal protein uL24 family. Part of the 50S ribosomal subunit.

One of two assembly initiator proteins, it binds directly to the 5'-end of the 23S rRNA, where it nucleates assembly of the 50S subunit. In terms of biological role, located at the polypeptide exit tunnel on the outside of the subunit. The protein is Large ribosomal subunit protein uL24 of Nanoarchaeum equitans (strain Kin4-M).